A 272-amino-acid chain; its full sequence is Dermonecrotic toxin LvSicTox-alphaIC1bi (272 aa).

Residue His-5 is part of the active site. Residues Glu-25 and Asp-27 each contribute to the Mg(2+) site. Catalysis depends on His-41, which acts as the Nucleophile. 2 disulfides stabilise this stretch: Cys-45–Cys-51 and Cys-47–Cys-189. Asp-84 is a binding site for Mg(2+).

The protein belongs to the arthropod phospholipase D family. Class II subfamily. Mg(2+) is required as a cofactor. In terms of tissue distribution, expressed by the venom gland.

It is found in the secreted. The catalysed reaction is an N-(acyl)-sphingosylphosphocholine = an N-(acyl)-sphingosyl-1,3-cyclic phosphate + choline. It catalyses the reaction an N-(acyl)-sphingosylphosphoethanolamine = an N-(acyl)-sphingosyl-1,3-cyclic phosphate + ethanolamine. The enzyme catalyses a 1-acyl-sn-glycero-3-phosphocholine = a 1-acyl-sn-glycero-2,3-cyclic phosphate + choline. It carries out the reaction a 1-acyl-sn-glycero-3-phosphoethanolamine = a 1-acyl-sn-glycero-2,3-cyclic phosphate + ethanolamine. Its function is as follows. Dermonecrotic toxins cleave the phosphodiester linkage between the phosphate and headgroup of certain phospholipids (sphingolipid and lysolipid substrates), forming an alcohol (often choline) and a cyclic phosphate. This toxin acts on sphingomyelin (SM). It may also act on ceramide phosphoethanolamine (CPE), lysophosphatidylcholine (LPC) and lysophosphatidylethanolamine (LPE), but not on lysophosphatidylserine (LPS), and lysophosphatidylglycerol (LPG). It acts by transphosphatidylation, releasing exclusively cyclic phosphate products as second products. Induces dermonecrosis, hemolysis, increased vascular permeability, edema, inflammatory response, and platelet aggregation. This chain is Dermonecrotic toxin LvSicTox-alphaIC1bi, found in Loxosceles variegata (Recluse spider).